The chain runs to 431 residues: RbAp48-related WD40 repeat-containing protein prw1 (431 aa).

WD repeat units lie at residues 127-159, 182-213, 232-263, 279-310, 323-354, and 380-411; these read SHPE…LVFD, KHTQ…SCWD, SHEK…HVHD, AHSG…ALWD, GHED…LVWD, and GHTS…QIWT.

It belongs to the WD repeat HIR1 family. Heterotetramer of alp13, clr6, prw1 and pst2.

The protein resides in the nucleus. Has a role in chromatin assembly and chromosome segregation. Involved in the deacetylation of histones. In Schizosaccharomyces pombe (strain 972 / ATCC 24843) (Fission yeast), this protein is RbAp48-related WD40 repeat-containing protein prw1 (prw1).